The primary structure comprises 608 residues: Mitogen-activated protein kinase kinase kinase 1 (608 aa).

Residues Met1–Gly13 are compositionally biased toward basic residues. The disordered stretch occupies residues Met1–Asn20. The tract at residues Met1–Asp325 is regulatory region. Residue Ser62 is modified to Phosphoserine. The binding with MPK4 stretch occupies residues Met192–Ala234. Disordered stretches follow at residues Val228–Trp247 and Ser256–Glu287. Acidic residues predominate over residues Asp271–Glu287. The region spanning Trp333–Val587 is the Protein kinase domain. ATP contacts are provided by residues Leu339–Val347 and Lys361. Residue Asp456 is the Proton acceptor of the active site. Position 603 is a phosphoserine (Ser603).

Belongs to the protein kinase superfamily. STE Ser/Thr protein kinase family. MAP kinase kinase kinase subfamily. Interacts with MKK1, MMK2 and MPK4. May form a ternary complex composed of MEKK1 and MKK1/MKK2 and MPK4. Interacts with RACK1A, RACK1B and RACK1C. Binds to CRLK1. Phosphorylated by CRLK1 in response to cold.

It is found in the cell membrane. The protein resides in the endosome. It catalyses the reaction L-seryl-[protein] + ATP = O-phospho-L-seryl-[protein] + ADP + H(+). It carries out the reaction L-threonyl-[protein] + ATP = O-phospho-L-threonyl-[protein] + ADP + H(+). Activated by cold via CRLK1-mediated phosphorylation and leading to elevated kinase activity towards MKK2. Its function is as follows. The MEKK1, MKK1/MKK2 and MPK4 function in a signaling pathway that modulates the expression of genes responding to biotic and abiotic stresses and also plays an important role in pathogen defense by negatively regulating innate immunity. Involved in the innate immune MAP kinase signaling cascade (MEKK1, MKK4/MKK5 and MPK3/MPK6) downstream of bacterial flagellin receptor FLS2. May be involved in the cold and salinity stress-mediated MAP kinase signaling cascade (MEKK1, MKK1/MKK2 and MPK4/MPK6). Activates by phosphorylation the downstream MKK2, MKK4 and MKK5 in a calcium-dependent manner. The protein is Mitogen-activated protein kinase kinase kinase 1 (MEKK1) of Arabidopsis thaliana (Mouse-ear cress).